A 1407-amino-acid polypeptide reads, in one-letter code: JmjC domain-containing histone demethylation protein 1 (1407 aa).

Disordered regions lie at residues 1 to 86 and 98 to 151; these read MISA…SSTI and PTFT…NAFS. Basic and acidic residues-rich tracts occupy residues 55–67 and 125–140; these read DHVR…KRPS and PVER…RDES. Residues 141-150 are compositionally biased toward polar residues; sequence SYTQHRSNAF. The segment at 323–382 adopts a PHD-type zinc-finger fold; it reads QASCATCNLVRIPVDNEDQDVTWISCDGCKRWFHIVCAGFKNDRETRTVDKFICKTCRPI. Residues 577–735 form the JmjC domain; it reads VSQSKLGRLI…MQIKIAKIEK (159 aa). Threonine 628 serves as a coordination point for substrate. Fe cation contacts are provided by histidine 631 and aspartate 633. Lysine 648 contacts substrate. Histidine 703 provides a ligand contact to Fe cation. 4 disordered regions span residues 893-987, 1004-1027, 1122-1183, and 1252-1389; these read KLSL…LGPK, KEEN…HHTP, IKAQ…QDSV, and DEMD…SLRL. Composition is skewed to basic and acidic residues over residues 896–914 and 928–938; these read LAEK…RNAD and LSERPAVDIQK. Polar residues predominate over residues 1008–1027; the sequence is NGASGSQMTVSTSSLGHHTP. The span at 1254 to 1264 shows a compositional bias: basic and acidic residues; that stretch reads MDIHDQVDAGG. A compositionally biased stretch (low complexity) spans 1273 to 1284; that stretch reads PSSGSRQSSRQP. The segment covering 1285 to 1296 has biased composition (basic and acidic residues); that stretch reads RQVERYMPEVHF. Residues 1297-1349 are compositionally biased toward low complexity; the sequence is AKTAKSTTTTPQTTRRSSFGSSGRKTTPGLSSGSKKSGSRPSSSHGKKSLSPS.

It belongs to the JHDM1 histone demethylase family. Fe(2+) serves as cofactor.

It localises to the nucleus. It carries out the reaction N(6),N(6)-dimethyl-L-lysyl(36)-[histone H3] + 2 2-oxoglutarate + 2 O2 = L-lysyl(36)-[histone H3] + 2 formaldehyde + 2 succinate + 2 CO2. Functionally, histone demethylase that specifically demethylates 'Lys-36' of histone H3, thereby playing a central role in histone code. The polypeptide is JmjC domain-containing histone demethylation protein 1 (jhd1) (Emericella nidulans (strain FGSC A4 / ATCC 38163 / CBS 112.46 / NRRL 194 / M139) (Aspergillus nidulans)).